We begin with the raw amino-acid sequence, 396 residues long: Protein DDI1 homolog 1 (396 aa).

Positions 1–81 constitute a Ubiquitin-like domain; it reads MLITVYCVRR…VVLLQKDNVG (81 aa). Residues 82–130 form a disordered region; the sequence is PRAPGRAPNQPRVDFSGIAVPGTSSSRPQHPGQQQQRTPAAQRSQGLAS. The segment covering 103–128 has biased composition (polar residues); that stretch reads GTSSSRPQHPGQQQQRTPAAQRSQGL. The active site involves Asp-260. The disordered stretch occupies residues 374–396; that stretch reads SGQDESSDKEITHSVMDSGRKEH. The span at 379–396 shows a compositional bias: basic and acidic residues; sequence SSDKEITHSVMDSGRKEH.

This sequence belongs to the DDI1 family.

Inhibited by the proteinase inhibitors amprenavir, indinavir, lopinavir, isovaleryl pepstatin, ritonavir and saquinavir. Functionally, probable aspartic protease. Seems to act as a proteasomal shuttle which links the proteasome and replication fork proteins like RTF2. Required, with DDI2, for cellular survival following replication stress. Together or redudantly with DDI2, removes RTF2 from stalled forks to allow cell cycle progression after replication stress and maintains genome integrity. This chain is Protein DDI1 homolog 1 (DDI1), found in Homo sapiens (Human).